Consider the following 650-residue polypeptide: Chaperone protein HtpG (650 aa).

The tract at residues 1–344 (MSKHTHSFQA…SADLPLNVSR (344 aa)) is a; substrate-binding. The interval 345 to 582 (ELLQESRDVR…DGGMSTQLAR (238 aa)) is b. A c region spans residues 583-650 (LLKQAGQSAP…YVKRVNALLA (68 aa)).

The protein belongs to the heat shock protein 90 family. As to quaternary structure, homodimer.

The protein resides in the cytoplasm. Its function is as follows. Molecular chaperone. Has ATPase activity. The sequence is that of Chaperone protein HtpG from Acidovorax sp. (strain JS42).